The sequence spans 430 residues: Glutamate-1-semialdehyde 2,1-aminomutase (430 aa).

At Lys270 the chain carries N6-(pyridoxal phosphate)lysine.

The protein belongs to the class-III pyridoxal-phosphate-dependent aminotransferase family. HemL subfamily. In terms of assembly, homodimer. The cofactor is pyridoxal 5'-phosphate.

Its subcellular location is the cytoplasm. It catalyses the reaction (S)-4-amino-5-oxopentanoate = 5-aminolevulinate. Its pathway is porphyrin-containing compound metabolism; protoporphyrin-IX biosynthesis; 5-aminolevulinate from L-glutamyl-tRNA(Glu): step 2/2. The polypeptide is Glutamate-1-semialdehyde 2,1-aminomutase (Cupriavidus necator (strain ATCC 17699 / DSM 428 / KCTC 22496 / NCIMB 10442 / H16 / Stanier 337) (Ralstonia eutropha)).